The chain runs to 207 residues: Zinc finger protein 487 (207 aa).

The 43-residue stretch at 1-43 (MLENYSLLLSVGYCITKPEVVCKLEHGQVLWILEEESPSQSHL) folds into the KRAB domain. The C2H2-type; atypical zinc-finger motif lies at 177–202 (KQCFEYNQCGKAFHEEAACSTHKRVC).

Belongs to the krueppel C2H2-type zinc-finger protein family.

The protein localises to the nucleus. Functionally, may be involved in transcriptional regulation. In Homo sapiens (Human), this protein is Zinc finger protein 487 (ZNF487).